Reading from the N-terminus, the 620-residue chain is Chaperone protein HscA homolog (620 aa).

This sequence belongs to the heat shock protein 70 family.

In terms of biological role, chaperone involved in the maturation of iron-sulfur cluster-containing proteins. Has a low intrinsic ATPase activity which is markedly stimulated by HscB. This Pasteurella multocida (strain Pm70) protein is Chaperone protein HscA homolog.